The primary structure comprises 647 residues: DNA topoisomerase 3 (647 aa).

Residues 2-135 form the Toprim domain; the sequence is TRLFIAEKPS…KKETVQRLLI (134 aa). Residues E8, D104, and D106 each coordinate Mg(2+). One can recognise a Topo IA-type catalytic domain in the interval 156-608; the sequence is FIPLSVSALA…TLQGRLEQLI (453 aa). Residues 195-200 are interaction with DNA; sequence SVGRVQ. Y332 acts as the O-(5'-phospho-DNA)-tyrosine intermediate in catalysis.

This sequence belongs to the type IA topoisomerase family. The cofactor is Mg(2+).

It carries out the reaction ATP-independent breakage of single-stranded DNA, followed by passage and rejoining.. In terms of biological role, releases the supercoiling and torsional tension of DNA, which is introduced during the DNA replication and transcription, by transiently cleaving and rejoining one strand of the DNA duplex. Introduces a single-strand break via transesterification at a target site in duplex DNA. The scissile phosphodiester is attacked by the catalytic tyrosine of the enzyme, resulting in the formation of a DNA-(5'-phosphotyrosyl)-enzyme intermediate and the expulsion of a 3'-OH DNA strand. The free DNA strand then undergoes passage around the unbroken strand, thus removing DNA supercoils. Finally, in the religation step, the DNA 3'-OH attacks the covalent intermediate to expel the active-site tyrosine and restore the DNA phosphodiester backbone. The polypeptide is DNA topoisomerase 3 (Vibrio cholerae serotype O1 (strain ATCC 39315 / El Tor Inaba N16961)).